Consider the following 223-residue polypeptide: N-(5'-phosphoribosyl)anthranilate isomerase (223 aa).

Belongs to the TrpF family.

It catalyses the reaction N-(5-phospho-beta-D-ribosyl)anthranilate = 1-(2-carboxyphenylamino)-1-deoxy-D-ribulose 5-phosphate. Its pathway is amino-acid biosynthesis; L-tryptophan biosynthesis; L-tryptophan from chorismate: step 3/5. This chain is N-(5'-phosphoribosyl)anthranilate isomerase, found in Moorella thermoacetica (strain ATCC 39073 / JCM 9320).